The chain runs to 37 residues: ATP synthase subunit O, mitochondrial (37 aa).

Belongs to the ATPase delta chain family. F-type ATPases have 2 components, CF(1) - the catalytic core - and CF(0) - the membrane proton channel. CF(1) has five subunits: alpha(3), beta(3), gamma(1), delta(1), epsilon(1). CF(0) has three main subunits: a, b and c.

It is found in the mitochondrion. The protein localises to the mitochondrion inner membrane. In terms of biological role, mitochondrial membrane ATP synthase (F(1)F(0) ATP synthase or Complex V) produces ATP from ADP in the presence of a proton gradient across the membrane which is generated by electron transport complexes of the respiratory chain. F-type ATPases consist of two structural domains, F(1) - containing the extramembraneous catalytic core and F(0) - containing the membrane proton channel, linked together by a central stalk and a peripheral stalk. During catalysis, ATP synthesis in the catalytic domain of F(1) is coupled via a rotary mechanism of the central stalk subunits to proton translocation. Part of the complex F(0) domain and the peripheric stalk, which acts as a stator to hold the catalytic alpha(3)beta(3) subcomplex and subunit a/ATP6 static relative to the rotary elements. The protein is ATP synthase subunit O, mitochondrial of Solanum tuberosum (Potato).